A 248-amino-acid polypeptide reads, in one-letter code: 3-deoxy-manno-octulosonate cytidylyltransferase (248 aa).

Belongs to the KdsB family.

It is found in the cytoplasm. It catalyses the reaction 3-deoxy-alpha-D-manno-oct-2-ulosonate + CTP = CMP-3-deoxy-beta-D-manno-octulosonate + diphosphate. The protein operates within nucleotide-sugar biosynthesis; CMP-3-deoxy-D-manno-octulosonate biosynthesis; CMP-3-deoxy-D-manno-octulosonate from 3-deoxy-D-manno-octulosonate and CTP: step 1/1. It participates in bacterial outer membrane biogenesis; lipopolysaccharide biosynthesis. In terms of biological role, activates KDO (a required 8-carbon sugar) for incorporation into bacterial lipopolysaccharide in Gram-negative bacteria. The sequence is that of 3-deoxy-manno-octulosonate cytidylyltransferase from Shigella boydii serotype 18 (strain CDC 3083-94 / BS512).